The chain runs to 56 residues: Preprotein translocase subunit SecG (56 aa).

Over 1–29 (MAKEKATLPPTGAGLMRFFDEDTKAVKIS) the chain is Cytoplasmic. The chain crosses the membrane as a helical span at residues 30–51 (PRGVIALTLILVALEILLHAFG). The Extracellular portion of the chain corresponds to 52–56 (PQIFG).

Belongs to the SEC61-beta family. As to quaternary structure, component of the protein translocase complex. Heterotrimer consisting of alpha (SecY), beta (SecG) and gamma (SecE) subunits. Can form oligomers of the heterotrimer.

The protein localises to the cell membrane. Functionally, involved in protein export. The function of the beta subunit is unknown, but it may be involved in stabilization of the trimeric complex. The sequence is that of Preprotein translocase subunit SecG from Thermococcus onnurineus (strain NA1).